Here is a 124-residue protein sequence, read N- to C-terminus: Small ribosomal subunit protein uS13 (124 aa).

Positions 95–124 (GLPVRGQRTKTNARTRKGPKRTIAGKKKAR) are disordered.

Belongs to the universal ribosomal protein uS13 family. Part of the 30S ribosomal subunit. Forms a loose heterodimer with protein S19. Forms two bridges to the 50S subunit in the 70S ribosome.

Its function is as follows. Located at the top of the head of the 30S subunit, it contacts several helices of the 16S rRNA. In the 70S ribosome it contacts the 23S rRNA (bridge B1a) and protein L5 of the 50S subunit (bridge B1b), connecting the 2 subunits; these bridges are implicated in subunit movement. Contacts the tRNAs in the A and P-sites. In Mycobacterium avium (strain 104), this protein is Small ribosomal subunit protein uS13.